The sequence spans 123 residues: Small ribosomal subunit protein uS12 (123 aa).

The span at 10–20 (KGRKKVKKKKT) shows a compositional bias: basic residues. Positions 10–32 (KGRKKVKKKKTAPALQGSPQKRG) are disordered. 3-methylthioaspartic acid is present on D89.

The protein belongs to the universal ribosomal protein uS12 family. Part of the 30S ribosomal subunit. Contacts proteins S8 and S17. May interact with IF1 in the 30S initiation complex.

In terms of biological role, with S4 and S5 plays an important role in translational accuracy. Interacts with and stabilizes bases of the 16S rRNA that are involved in tRNA selection in the A site and with the mRNA backbone. Located at the interface of the 30S and 50S subunits, it traverses the body of the 30S subunit contacting proteins on the other side and probably holding the rRNA structure together. The combined cluster of proteins S8, S12 and S17 appears to hold together the shoulder and platform of the 30S subunit. The chain is Small ribosomal subunit protein uS12 from Halothermothrix orenii (strain H 168 / OCM 544 / DSM 9562).